A 314-amino-acid polypeptide reads, in one-letter code: Beta-ketoacyl-[acyl-carrier-protein] synthase III (314 aa).

Catalysis depends on residues cysteine 112 and histidine 241. An ACP-binding region spans residues 242-246; the sequence is QANIR. Residue asparagine 271 is part of the active site.

Belongs to the thiolase-like superfamily. FabH family. Homodimer.

Its subcellular location is the cytoplasm. It catalyses the reaction malonyl-[ACP] + acetyl-CoA + H(+) = 3-oxobutanoyl-[ACP] + CO2 + CoA. It functions in the pathway lipid metabolism; fatty acid biosynthesis. In terms of biological role, catalyzes the condensation reaction of fatty acid synthesis by the addition to an acyl acceptor of two carbons from malonyl-ACP. Catalyzes the first condensation reaction which initiates fatty acid synthesis and may therefore play a role in governing the total rate of fatty acid production. Possesses both acetoacetyl-ACP synthase and acetyl transacylase activities. Its substrate specificity determines the biosynthesis of branched-chain and/or straight-chain of fatty acids. In Vesicomyosocius okutanii subsp. Calyptogena okutanii (strain HA), this protein is Beta-ketoacyl-[acyl-carrier-protein] synthase III.